A 278-amino-acid chain; its full sequence is MTGFGARLAEAKAHRGPLCLGIDPHPELLRAWDLPATADGLAAFCDICVAAFAGFAVVKPQVAFFEAYGAAGFAVLEGTMAALRANGVLVLADAKRGDIGSTMAAYAAAWAGDSPLAADAVTVSPFLGFGSLRPLLEVATANDRGVFVLAATSNPEGATIQRADADGRTVAQLIVDQVGLFNSEVGEVTGSEPGSVGVVVGATVLNPPDVSGLGGPVLVPGVGVQGGRPEALGGLGGAAPQQLLPAVSREVLRAGPSISEVRAAAERMLDSVAYLSAV.

K95 serves as the catalytic Proton donor.

Belongs to the OMP decarboxylase family. Type 2 subfamily.

The enzyme catalyses orotidine 5'-phosphate + H(+) = UMP + CO2. It functions in the pathway pyrimidine metabolism; UMP biosynthesis via de novo pathway; UMP from orotate: step 2/2. The protein is Orotidine 5'-phosphate decarboxylase of Mycobacterium ulcerans (strain Agy99).